The chain runs to 222 residues: Probable transaldolase 2 (222 aa).

The active-site Schiff-base intermediate with substrate is the K90.

The protein belongs to the transaldolase family. Type 3B subfamily.

The protein localises to the cytoplasm. The enzyme catalyses D-sedoheptulose 7-phosphate + D-glyceraldehyde 3-phosphate = D-erythrose 4-phosphate + beta-D-fructose 6-phosphate. The protein operates within carbohydrate degradation; pentose phosphate pathway; D-glyceraldehyde 3-phosphate and beta-D-fructose 6-phosphate from D-ribose 5-phosphate and D-xylulose 5-phosphate (non-oxidative stage): step 2/3. Transaldolase is important for the balance of metabolites in the pentose-phosphate pathway. The chain is Probable transaldolase 2 from Bacillus cereus (strain ATCC 14579 / DSM 31 / CCUG 7414 / JCM 2152 / NBRC 15305 / NCIMB 9373 / NCTC 2599 / NRRL B-3711).